A 432-amino-acid chain; its full sequence is Phosphomethylpyrimidine synthase (432 aa).

Residues N69, M98, Y127, H163, 185–187 (SRG), 226–229 (DACR), and E265 each bind substrate. Residue H269 participates in Zn(2+) binding. Y292 lines the substrate pocket. Zn(2+) is bound at residue H333. Positions 409, 412, and 416 each coordinate [4Fe-4S] cluster.

This sequence belongs to the ThiC family. Requires [4Fe-4S] cluster as cofactor.

It carries out the reaction 5-amino-1-(5-phospho-beta-D-ribosyl)imidazole + S-adenosyl-L-methionine = 4-amino-2-methyl-5-(phosphooxymethyl)pyrimidine + CO + 5'-deoxyadenosine + formate + L-methionine + 3 H(+). It participates in cofactor biosynthesis; thiamine diphosphate biosynthesis. Its function is as follows. Catalyzes the synthesis of the hydroxymethylpyrimidine phosphate (HMP-P) moiety of thiamine from aminoimidazole ribotide (AIR) in a radical S-adenosyl-L-methionine (SAM)-dependent reaction. This chain is Phosphomethylpyrimidine synthase, found in Pelotomaculum thermopropionicum (strain DSM 13744 / JCM 10971 / SI).